A 612-amino-acid chain; its full sequence is Apoptosis-inducing factor 1, mitochondrial (612 aa).

2 short sequence motifs (mitochondrial localization signal) span residues 1–30 (MFRC…PKQR) and 62–88 (KMDN…KTIK). A mitochondrion-targeting transit peptide spans 1–54 (MFRCGGLAGAFKQKLVPLVRTVYVQRPKQRNRLPGNLFQQWRVPLELQMARQMA). Positions 55–101 (SSGSSGGKMDNSVLVLIVGLSTIGAGAYAYKTIKEDQKRYNERVMGL) are cleaved as a propeptide — removed in mature form. N6-succinyllysine is present on lysine 108. Position 115 is a phosphoserine (serine 115). Residues 133-482 (FLLIGGGTAA…KPYWHQSMFW (350 aa)) form an FAD-dependent oxidoreductase region. FAD-binding positions include 137–141 (GGGTA), 163–164 (ED), arginine 171, and lysine 176. Position 195 (tryptophan 195) interacts with NAD(+). Valine 232 serves as a coordination point for FAD. Lysine 254 is covalently cross-linked (Glycyl lysine isopeptide (Lys-Gly) (interchain with G-Cter in ubiquitin)). The residue at position 267 (serine 267) is a Phosphoserine. Arginine 284 is an FAD binding site. NAD(+) is bound by residues 307 to 310 (GGFL), glutamate 335, and lysine 341. Serine 370 bears the Phosphoserine mark. Lysine 387 carries the post-translational modification N6-acetyllysine. Position 398 (glycine 398) interacts with NAD(+). Aspartate 437 provides a ligand contact to FAD. The short motif at 445-450 (KLGRRR) is the Nuclear localization signal element. NAD(+) contacts are provided by residues 452-453 (EH), tryptophan 482, and glutamate 492. FAD-binding positions include 453–454 (HH) and tryptophan 482. A compositionally biased stretch (polar residues) spans 512–528 (AQDNPKSATEQSGTGIR). Positions 512-551 (AQDNPKSATEQSGTGIRSESETESEASEITIPPSAPAVPQ) are disordered. Position 520 is a phosphothreonine (threonine 520). Serine 523 and serine 529 each carry phosphoserine. Asparagine 582 contributes to the NAD(+) binding site. Lysine 592 carries the N6-acetyllysine modification.

The protein belongs to the FAD-dependent oxidoreductase family. Monomer (oxidized form). Homodimer (reduced form). Upon reduction with NADH, undergoes dimerization and forms tight, long-lived FADH2-NAD charge transfer complexes (CTC) resistant to oxidation. Also dimerizes with isoform 3 preventing its release from mitochondria. Interacts with XIAP/BIRC4. Interacts (via N-terminus) with EIF3G (via C-terminus). Interacts with PRELID1. Interacts with CHCHD4; the interaction increases in presence of NADH. Interacts with processed form of PARP1 (Poly [ADP-ribose] polymerase 1, processed C-terminus); interaction is mediated with poly-ADP-ribose chains attached to PARP1, promoting translocation into the nucleus. Requires FAD as cofactor. Under normal conditions, a 54-residue N-terminal segment is first proteolytically removed during or just after translocation into the mitochondrial intermembrane space (IMS) by the mitochondrial processing peptidase (MPP) to form the inner-membrane-anchored mature form (AIFmit). During apoptosis, it is further proteolytically processed at amino-acid position 101 leading to the generation of the mature form, which is confined to the mitochondrial IMS in a soluble form (AIFsol). AIFsol is released to the cytoplasm in response to specific death signals, and translocated to the nucleus, where it induces nuclear apoptosis in a caspase-independent manner. Post-translationally, ubiquitination by XIAP/BIRC4 does not lead to proteasomal degradation. Ubiquitination at Lys-254 by XIAP/BIRC4 blocks its ability to bind DNA and induce chromatin degradation, thereby inhibiting its ability to induce cell death. In terms of tissue distribution, expressed in cortical neurons (at protein level). As to expression, expressed in liver (at protein level).

The protein localises to the mitochondrion intermembrane space. It localises to the mitochondrion inner membrane. The protein resides in the cytoplasm. It is found in the nucleus. Its subcellular location is the perinuclear region. The protein localises to the mitochondrion. It localises to the cytosol. It catalyses the reaction A + NADH + H(+) = AH2 + NAD(+). Its function is as follows. Functions both as NADH oxidoreductase and as regulator of apoptosis. In response to apoptotic stimuli, it is released from the mitochondrion intermembrane space into the cytosol and to the nucleus, where it functions as a proapoptotic factor in a caspase-independent pathway. Release into the cytoplasm is mediated upon binding to poly-ADP-ribose chains. The soluble form (AIFsol) found in the nucleus induces 'parthanatos' i.e. caspase-independent fragmentation of chromosomal DNA. Binds to DNA in a sequence-independent manner. Interacts with EIF3G, and thereby inhibits the EIF3 machinery and protein synthesis, and activates caspase-7 to amplify apoptosis. Plays a critical role in caspase-independent, pyknotic cell death in hydrogen peroxide-exposed cells. In contrast, participates in normal mitochondrial metabolism. Plays an important role in the regulation of respiratory chain biogenesis by interacting with CHCHD4 and controlling CHCHD4 mitochondrial import. The protein is Apoptosis-inducing factor 1, mitochondrial of Mus musculus (Mouse).